A 212-amino-acid chain; its full sequence is ER lumen protein-retaining receptor 2 (212 aa).

Over 1-4 (MNVF) the chain is Lumenal. The helical transmembrane segment at 5–24 (RLSGDLCHLAAIIILLLKIW) threads the bilayer. At 25–32 (NSRSCAGI) the chain is on the cytoplasmic side. A helical transmembrane segment spans residues 33-52 (SGKSQLLFAMVFTTRYLDLF). Residues 47–48 (RY) are interaction with the K-D-E-L motif on target proteins. The Lumenal portion of the chain corresponds to 53–58 (TSFISL). Residues 59–79 (YNTSMKVIYMGCAYATVYLIY) form a helical membrane-spanning segment. Topologically, residues 80 to 92 (MKFKATYDGNHDT) are cytoplasmic. A helical transmembrane segment spans residues 93–110 (FRVEFLVVPVGGLSVLVN). The Lumenal portion of the chain corresponds to 111-116 (HDFSPL). The chain crosses the membrane as a helical span at residues 117-135 (EILWTFSIYLESVAILPQL). Over 136–149 (FMISKTGEAETITT) the chain is Cytoplasmic. The chain crosses the membrane as a helical span at residues 150–168 (HYLFFLGLYRALYLFNWIW). Residues 159 to 169 (RALYLFNWIWR) form an interaction with the K-D-E-L motif on target proteins region. Over 169–178 (RFSFEGFFDL) the chain is Lumenal. A helical membrane pass occupies residues 179-199 (IAIVAGVVQTILYCDFFYLYV). Residues 200 to 212 (TKVLKGKKLSLPA) are Cytoplasmic-facing. Residues 204–207 (KGKK) are important for recycling of cargo proteins with the sequence motif K-D-E-L from the Golgi to the endoplasmic reticulum.

The protein belongs to the ERD2 family.

It localises to the endoplasmic reticulum membrane. The protein localises to the golgi apparatus membrane. The protein resides in the cytoplasmic vesicle. Its subcellular location is the COPI-coated vesicle membrane. Its function is as follows. Receptor for the C-terminal sequence motif K-D-E-L that is present on endoplasmic reticulum resident proteins and that mediates their recycling from the Golgi back to the endoplasmic reticulum. Binding is pH dependent, and is optimal at pH 5-5.4. The polypeptide is ER lumen protein-retaining receptor 2 (kdelr2) (Xenopus laevis (African clawed frog)).